Here is a 92-residue protein sequence, read N- to C-terminus: Probable Fe(2+)-trafficking protein (92 aa).

Belongs to the Fe(2+)-trafficking protein family.

Its function is as follows. Could be a mediator in iron transactions between iron acquisition and iron-requiring processes, such as synthesis and/or repair of Fe-S clusters in biosynthetic enzymes. The sequence is that of Probable Fe(2+)-trafficking protein from Shewanella pealeana (strain ATCC 700345 / ANG-SQ1).